A 1315-amino-acid chain; its full sequence is ESX secretion system protein EccC (1315 aa).

The segment covering 1–11 (MSTVLVRRKER) has biased composition (basic residues). Residues 1 to 21 (MSTVLVRRKERRQPPQMPRGE) form a disordered region. The Cytoplasmic portion of the chain corresponds to 1 to 40 (MSTVLVRRKERRQPPQMPRGEILLESPPELPEVVTNSFQN). A helical transmembrane segment spans residues 41-61 (VLMYLPMAAGSAAMVFTFLNH). Residues 62–64 (RNT) are Extracellular-facing. Residues 65 to 85 (LQLVAGGMFALSMFGMMFGQL) form a helical membrane-spanning segment. The Cytoplasmic segment spans residues 86–1315 (SQQSGERKTK…RLIQTAYRES (1230 aa)). 2 consecutive FtsK domains span residues 456 to 656 (GRPL…MESR) and 813 to 1004 (RDPY…YESE). 479 to 486 (GATGSGKS) provides a ligand contact to ATP. Residue E593 is part of the active site. The tract at residues 721-1315 (RPQVVEQPQP…RLIQTAYRES (595 aa)) is binds EsxB. Residues 834-839 (QTGKST), T1031, 1119-1124 (ECGKSN), Q1293, and 1310-1311 (TA) contribute to the ATP site. The region spanning 1099–1282 (LSPVYLDFNT…MSGNKDEGIL (184 aa)) is the FtsK 3 domain.

As to quaternary structure, the cytosolic domain can form homodimers. Binds EsxB, which leads to multimerization, however EsxA disassembles the multimers, possibly by making EccC-EsxA-EsxB trimers instead of EccC-EsxB-EsxB-EccC tetramers. Forms a complex with EsxA and EsxB, probably wholly mediated by EsxB.

The protein localises to the cell membrane. EsxB binding to the third FtsK domain causes multimerization; a subsequent unknown step relieves the allosteric inhibition of linker 2 on FtsK domain 1, activating the ATPase activity; a mutant EsxB ('Ala-98') does not cause multimers to form. In terms of biological role, part of the ESX specialized secretion system, which exports proteins from the cell including EsxA (ESAT-6) and EsxB (CFP-10). Has weak intrinsic ATPase activity; probably only the first FtsK domain can hydrolyze ATP. Might be the translocase subunit. This Thermomonospora curvata (strain ATCC 19995 / DSM 43183 / JCM 3096 / KCTC 9072 / NBRC 15933 / NCIMB 10081 / Henssen B9) protein is ESX secretion system protein EccC.